The following is a 91-amino-acid chain: Small ribosomal subunit protein uS15 (91 aa).

This sequence belongs to the universal ribosomal protein uS15 family. Part of the 30S ribosomal subunit. Forms a bridge to the 50S subunit in the 70S ribosome, contacting the 23S rRNA.

One of the primary rRNA binding proteins, it binds directly to 16S rRNA where it helps nucleate assembly of the platform of the 30S subunit by binding and bridging several RNA helices of the 16S rRNA. Functionally, forms an intersubunit bridge (bridge B4) with the 23S rRNA of the 50S subunit in the ribosome. This chain is Small ribosomal subunit protein uS15, found in Synechococcus sp. (strain JA-2-3B'a(2-13)) (Cyanobacteria bacterium Yellowstone B-Prime).